The sequence spans 599 residues: Riboflavin biosynthesis protein PYRR, chloroplastic (599 aa).

A chloroplast-targeting transit peptide spans 1–17 (MALSFRISSSSPLICRA). The CMP/dCMP-type deaminase domain occupies 30–152 (TTDAAFIRRA…ELRSHGIEVN (123 aa)).

This sequence in the C-terminal section; belongs to the YbiA family.

It is found in the plastid. It localises to the chloroplast. The catalysed reaction is 5-amino-6-(5-phospho-D-ribitylamino)uracil + NADP(+) = 5-amino-6-(5-phospho-D-ribosylamino)uracil + NADPH + H(+). The enzyme catalyses 2,5-diamino-6-hydroxy-4-(5-phosphoribosylamino)-pyrimidine + H2O = 2,5,6-triamino-4-hydroxypyrimidine + D-ribose 5-phosphate. It carries out the reaction 5-amino-6-(5-phospho-D-ribosylamino)uracil + H2O = 5,6-diaminouracil + D-ribose 5-phosphate. It functions in the pathway cofactor biosynthesis; riboflavin biosynthesis; 5-amino-6-(D-ribitylamino)uracil from GTP: step 3/4. In terms of biological role, pyrimidine reductase involved in the riboflavin biosynthesis pathway. Also has a non-functional N-terminal deaminase domain that lacks the catalytically essential zinc-binding residues. Its function is as follows. Catalyzes the hydrolysis of the N-glycosidic bond in the first two intermediates of riboflavin biosynthesis, which are highly reactive metabolites, yielding relatively innocuous products. Thus, can divert a surplus of harmful intermediates into relatively harmless products and pre-empt the damage these intermediates would otherwise do. Helps maintain flavin levels. Has no activity against GTP, nucleoside monophosphates or ADP-ribose. This chain is Riboflavin biosynthesis protein PYRR, chloroplastic (PYRR), found in Arabidopsis thaliana (Mouse-ear cress).